The sequence spans 501 residues: Ammonium transporter 2 member 2 (501 aa).

11 consecutive transmembrane segments (helical) span residues valine 35 to isoleucine 55, serine 64 to phenylalanine 84, leucine 140 to leucine 160, leucine 174 to tyrosine 194, glycine 203 to glycine 223, isoleucine 238 to glycine 258, threonine 274 to glycine 294, valine 298 to leucine 318, tryptophan 322 to leucine 342, leucine 356 to leucine 376, and phenylalanine 412 to isoleucine 432.

This sequence belongs to the ammonia transporter channel (TC 1.A.11.2) family.

It localises to the membrane. Its function is as follows. Involved in ammonium transport. The protein is Ammonium transporter 2 member 2 (AMT2-2) of Oryza sativa subsp. japonica (Rice).